Reading from the N-terminus, the 221-residue chain is GFP-like non-fluorescent chromoprotein (221 aa).

The segment at residues Gln62 to Gly64 is a cross-link (2-iminomethyl-5-imidazolinone (Gln-Gly)). Tyr63 is subject to 2,3-didehydrotyrosine.

It belongs to the GFP family. As to quaternary structure, homotetramer. Contains a chromophore consisting of modified amino acid residues. The chromophore is formed by autocatalytic backbone condensation between Xaa-N and Gly-(N+2), oxidation of Tyr-(N+1) to didehydrotyrosine, and formation of a double bond to the alpha-amino nitrogen of residue Xaa-N. Maturation of the chromophore requires nothing other than molecular oxygen. The precise stereochemistry of the tyrosine has not been determined.

Functionally, non-fluorescent pigment protein that is lilac in color. The chain is GFP-like non-fluorescent chromoprotein from Goniopora tenuidens (Anemone coral).